A 41-amino-acid polypeptide reads, in one-letter code: uncharacterized protein (41 aa).

The interval 1-41 (MGKKHRNRITGQKKNNHIPEKDIIAAEEAHGKEYSAAKRKP) is disordered. Over residues 17–41 (HIPEKDIIAAEEAHGKEYSAAKRKP) the composition is skewed to basic and acidic residues.

This is an uncharacterized protein from Bacillus subtilis (strain 168).